The primary structure comprises 353 residues: tRNA-specific 2-thiouridylase MnmA 2 (353 aa).

Residues 9–16 and M35 each bind ATP; that span reads AMSGGVDS. C98 serves as the catalytic Nucleophile. C98 and C194 are disulfide-bonded. Residue G122 participates in ATP binding. Residues 144 to 146 are interaction with tRNA; it reads KDQ. C194 (cysteine persulfide intermediate) is an active-site residue. An interaction with tRNA region spans residues 300-301; the sequence is RY.

Belongs to the MnmA/TRMU family.

The protein localises to the cytoplasm. The catalysed reaction is S-sulfanyl-L-cysteinyl-[protein] + uridine(34) in tRNA + AH2 + ATP = 2-thiouridine(34) in tRNA + L-cysteinyl-[protein] + A + AMP + diphosphate + H(+). Catalyzes the 2-thiolation of uridine at the wobble position (U34) of tRNA, leading to the formation of s(2)U34. In Clostridium botulinum (strain ATCC 19397 / Type A), this protein is tRNA-specific 2-thiouridylase MnmA 2.